We begin with the raw amino-acid sequence, 460 residues long: Kynurenine 3-monooxygenase (460 aa).

It belongs to the aromatic-ring hydroxylase family. KMO subfamily. The cofactor is FAD.

The protein localises to the mitochondrion. It carries out the reaction L-kynurenine + NADPH + O2 + H(+) = 3-hydroxy-L-kynurenine + NADP(+) + H2O. It participates in cofactor biosynthesis; NAD(+) biosynthesis; quinolinate from L-kynurenine: step 1/3. Functionally, catalyzes the hydroxylation of L-kynurenine (L-Kyn) to form 3-hydroxy-L-kynurenine (L-3OHKyn). Required for synthesis of quinolinic acid. This Dictyostelium discoideum (Social amoeba) protein is Kynurenine 3-monooxygenase.